Here is a 421-residue protein sequence, read N- to C-terminus: D-amino acid dehydrogenase (421 aa).

FAD is bound at residue 3-17 (VLVLGGGVVGVASAY).

The protein belongs to the DadA oxidoreductase family. FAD is required as a cofactor.

It carries out the reaction a D-alpha-amino acid + A + H2O = a 2-oxocarboxylate + AH2 + NH4(+). The protein operates within amino-acid degradation; D-alanine degradation; NH(3) and pyruvate from D-alanine: step 1/1. Its function is as follows. Oxidative deamination of D-amino acids. The protein is D-amino acid dehydrogenase of Methylobacterium nodulans (strain LMG 21967 / CNCM I-2342 / ORS 2060).